Here is a 431-residue protein sequence, read N- to C-terminus: tRNA-2-methylthio-N(6)-dimethylallyladenosine synthase (431 aa).

The MTTase N-terminal domain occupies 2–117 (KKLFIETLGC…ITEVVDKKHA (116 aa)). [4Fe-4S] cluster is bound by residues cysteine 11, cysteine 48, cysteine 80, cysteine 149, cysteine 153, and cysteine 156. One can recognise a Radical SAM core domain in the interval 135–368 (RTNPFKAMVN…QTRHTEILDE (234 aa)). The 61-residue stretch at 371–431 (DAQLGKVHEV…SRGALDGVLV (61 aa)) folds into the TRAM domain.

The protein belongs to the methylthiotransferase family. MiaB subfamily. As to quaternary structure, monomer. [4Fe-4S] cluster serves as cofactor.

The protein localises to the cytoplasm. The catalysed reaction is N(6)-dimethylallyladenosine(37) in tRNA + (sulfur carrier)-SH + AH2 + 2 S-adenosyl-L-methionine = 2-methylsulfanyl-N(6)-dimethylallyladenosine(37) in tRNA + (sulfur carrier)-H + 5'-deoxyadenosine + L-methionine + A + S-adenosyl-L-homocysteine + 2 H(+). Functionally, catalyzes the methylthiolation of N6-(dimethylallyl)adenosine (i(6)A), leading to the formation of 2-methylthio-N6-(dimethylallyl)adenosine (ms(2)i(6)A) at position 37 in tRNAs that read codons beginning with uridine. The protein is tRNA-2-methylthio-N(6)-dimethylallyladenosine synthase of Sulfurovum sp. (strain NBC37-1).